The sequence spans 182 residues: Translation initiation factor IF-3 (182 aa).

The disordered stretch occupies residues 1–22 (MPLGDCNISTPDNKQNRKNQEI).

Belongs to the IF-3 family. As to quaternary structure, monomer.

It is found in the cytoplasm. In terms of biological role, IF-3 binds to the 30S ribosomal subunit and shifts the equilibrium between 70S ribosomes and their 50S and 30S subunits in favor of the free subunits, thus enhancing the availability of 30S subunits on which protein synthesis initiation begins. The polypeptide is Translation initiation factor IF-3 (Xanthomonas axonopodis pv. citri (strain 306)).